A 438-amino-acid polypeptide reads, in one-letter code: MHKVAIVGRPNVGKSSLFNRLIGRREAVVADFPGVTRDAKEGLMLYHNHRITLIDTGGLWSGDEWEQAIREKAEWAMEGAQAVIFVLDPREGLSAADYEVADWLRRLGKPVIVTANKIDSQKHEPYLAELWGLGFGDPVAISAEHARGLDDLMDRVMKYLPEDDEDVPDIAPIRISLIGRPNVGKSSLLNAITQSDRAIVADLPGTTRDSLDVEWDYGGQRFVLVDTAGIRKKPDTAIEDFAIQRSQAAIERSDVIWLVVNATDIGDHELKLANLAYDSGKPVIVVVNKWDLVPDAELKSTEKDLNQKLHHISFAPRVYTSAINDYGIHDMLAEAMKLYEKWQSRIGTSELNRWLEVWQMKQRVPNFHGKPLRMYFMTQVETAPPTFAIFCNRADFVTRAYEGFLQNRIREDLELAGVPVRLKWKEKGPYKKGEADED.

EngA-type G domains are found at residues 2–164 (HKVA…PEDD) and 173–343 (IRIS…EKWQ). Residues 8-15 (GRPNVGKS), 55-59 (DTGGL), 116-119 (NKID), 179-186 (GRPNVGKS), 226-230 (DTAGI), and 288-291 (NKWD) each bind GTP. Residues 344 to 428 (SRIGTSELNR…PVRLKWKEKG (85 aa)) form the KH-like domain.

This sequence belongs to the TRAFAC class TrmE-Era-EngA-EngB-Septin-like GTPase superfamily. EngA (Der) GTPase family. Associates with the 50S ribosomal subunit.

Its function is as follows. GTPase that plays an essential role in the late steps of ribosome biogenesis. This chain is GTPase Der, found in Deinococcus radiodurans (strain ATCC 13939 / DSM 20539 / JCM 16871 / CCUG 27074 / LMG 4051 / NBRC 15346 / NCIMB 9279 / VKM B-1422 / R1).